The chain runs to 1084 residues: Cellulose synthase A catalytic subunit 2 [UDP-forming] (1084 aa).

Met-1 is subject to N-acetylmethionine. At 1 to 278 (MNTGGRLIAG…RSSRINPYRM (278 aa)) the chain is on the cytoplasmic side. 8 residues coordinate Zn(2+): Cys-39, Cys-42, Cys-58, Cys-61, Cys-66, Cys-69, Cys-81, and Cys-84. Residues 39–85 (CQICGDEIELTVSSELFVACNECAFPVCRPCYEYERREGNQACPQCK) form an RING-type; degenerate zinc finger. The segment at 230–259 (IKHEGGNNGRGSNDDDELDDPDMPMMDEGR) is disordered. A helical transmembrane segment spans residues 279 to 299 (LILCRLAILGLFFHYRILHPV). The Extracellular segment spans residues 300–301 (ND). The helical transmembrane segment at 302–322 (AYGLWLTSVICEIWFAVSWIL) threads the bilayer. Topologically, residues 323–867 (DQFPKWYPIE…INSVVYPWTS (545 aa)) are cytoplasmic. UDP-alpha-D-glucose-binding residues include Ser-361, Lys-367, Glu-368, and Asp-397. Asp-397 is a catalytic residue. Residues 451-477 (VRERRAMKRDYEEFKVKINALVATAQK) adopt a coiled-coil conformation. Lys-538 is a binding site for UDP-alpha-D-glucose. Mn(2+) contacts are provided by Lys-539 and Asp-563. Residue Asp-784 is part of the active site. Residues 868–888 (LPLIVYCSLPAVCLLTGKFIV) form a helical membrane-spanning segment. At 889–893 (PEISN) the chain is on the extracellular side. A helical membrane pass occupies residues 894–914 (YAGILFMLMFISIAVTGILEM). The Cytoplasmic portion of the chain corresponds to 915–929 (QWGGVGIDDWWRNEQ). Residues 930–950 (FWVIGGASSHLFALFQGLLKV) form a helical membrane-spanning segment. The Extracellular portion of the chain corresponds to 951-979 (LAGVNTNFTVTSKAADDGAFSELYIFKWT). Residue Asn-957 is glycosylated (N-linked (GlcNAc...) asparagine). A helical transmembrane segment spans residues 980–1000 (TLLIPPTTLLIINIIGVIVGV). Over 1001–1011 (SDAISNGYDSW) the chain is Cytoplasmic. The chain crosses the membrane as a helical span at residues 1012-1032 (GPLFGRLFFALWVIVHLYPFL). Topologically, residues 1033–1041 (KGMLGKQDK) are extracellular. The helical transmembrane segment at 1042–1062 (MPTIIVVWSILLASILTLLWV) threads the bilayer. At 1063-1084 (RVNPFVAKGGPVLEICGLNCGN) the chain is on the cytoplasmic side.

It belongs to the glycosyltransferase 2 family. Plant cellulose synthase subfamily. Homodimer. Interaction through zinc finger domain. The cofactor is Mn(2+). Zn(2+) serves as cofactor. As to expression, strongly and ubiquitously expressed. Localized in some dividing and expanding cells, as well as in vascular tissues.

The protein localises to the cell membrane. The catalysed reaction is [(1-&gt;4)-beta-D-glucosyl](n) + UDP-alpha-D-glucose = [(1-&gt;4)-beta-D-glucosyl](n+1) + UDP + H(+). It participates in glycan metabolism; plant cellulose biosynthesis. In terms of biological role, catalytic subunit of cellulose synthase terminal complexes ('rosettes'), required for beta-1,4-glucan microfibril crystallization, a major mechanism of the cell wall formation. Involved in the primary cell wall formation. This is Cellulose synthase A catalytic subunit 2 [UDP-forming] from Arabidopsis thaliana (Mouse-ear cress).